The chain runs to 60 residues: MAAKKVVKATPKRSELYTVDAQGKATTSHRACPRCGAGVFMGEHKDRFSCGKCGYTEFKQ.

Zn(2+)-binding residues include C32, C35, C50, and C53. The C4-type zinc-finger motif lies at 32–53 (CPRCGAGVFMGEHKDRFSCGKC).

It belongs to the eukaryotic ribosomal protein eS31 family. Part of the 30S ribosomal subunit. It depends on Zn(2+) as a cofactor.

The chain is Small ribosomal subunit protein eS31 from Methanocorpusculum labreanum (strain ATCC 43576 / DSM 4855 / Z).